A 117-amino-acid chain; its full sequence is Large ribosomal subunit protein uL18 (117 aa).

This sequence belongs to the universal ribosomal protein uL18 family. As to quaternary structure, part of the 50S ribosomal subunit; part of the 5S rRNA/L5/L18/L25 subcomplex. Contacts the 5S and 23S rRNAs.

Its function is as follows. This is one of the proteins that bind and probably mediate the attachment of the 5S RNA into the large ribosomal subunit, where it forms part of the central protuberance. This Photobacterium profundum (strain SS9) protein is Large ribosomal subunit protein uL18.